The sequence spans 267 residues: Probable ribosomal RNA small subunit methyltransferase A (267 aa).

S-adenosyl-L-methionine-binding residues include Leu12, Gly37, Glu58, Asp83, and Asn100.

The protein belongs to the class I-like SAM-binding methyltransferase superfamily. rRNA adenine N(6)-methyltransferase family. RsmA subfamily.

The protein localises to the cytoplasm. Its function is as follows. Specifically dimethylates two adjacent adenosines in the loop of a conserved hairpin near the 3'-end of 16S rRNA in the 30S particle. May play a critical role in biogenesis of 30S subunits. The chain is Probable ribosomal RNA small subunit methyltransferase A from Methanococcus maripaludis (strain DSM 14266 / JCM 13030 / NBRC 101832 / S2 / LL).